A 330-amino-acid polypeptide reads, in one-letter code: Aspartate--ammonia ligase (330 aa).

The protein belongs to the class-II aminoacyl-tRNA synthetase family. AsnA subfamily.

Its subcellular location is the cytoplasm. The enzyme catalyses L-aspartate + NH4(+) + ATP = L-asparagine + AMP + diphosphate + H(+). Its pathway is amino-acid biosynthesis; L-asparagine biosynthesis; L-asparagine from L-aspartate (ammonia route): step 1/1. This is Aspartate--ammonia ligase from Shigella dysenteriae serotype 1 (strain Sd197).